The chain runs to 247 residues: Probable transcriptional regulatory protein lpg1286 (247 aa).

The protein belongs to the TACO1 family.

The protein localises to the cytoplasm. The chain is Probable transcriptional regulatory protein lpg1286 from Legionella pneumophila subsp. pneumophila (strain Philadelphia 1 / ATCC 33152 / DSM 7513).